The sequence spans 65 residues: SCOCO-like protein 1 (65 aa).

Positions 8–44 (RSLMEQKAMELQQQLQALLDEIDQNKQESENISRESE) form a coiled coil.

Belongs to the SLO1 family.

This is SCOCO-like protein 1 from Schizosaccharomyces pombe (strain 972 / ATCC 24843) (Fission yeast).